A 97-amino-acid polypeptide reads, in one-letter code: Scorpine-like peptide Ev37 (97 aa).

The signal sequence occupies residues 1–19 (MNSKLTVIVLLALITIASC). In terms of domain architecture, BetaSPN-type CS-alpha/beta spans 55-95 (QNLCAFNVDTVGMCDADCKRQGKAKGVCHGTKCKCDVELSY). 3 disulfides stabilise this stretch: C58–C82, C68–C87, and C72–C89.

The protein belongs to the long chain scorpion toxin family. Class 3 subfamily. As to expression, expressed by the venom gland.

The protein localises to the secreted. Functionally, selectively inhibits Kv1.3/KCNA3 channel (IC(50)=0.95 uM). Both N-terminal and C-terminal domains are likely involved in the interaction with Kv1.3/KCNA3, since neither its N-terminal domain (1-36) nor its C-terminal domain (37-78) block Kv1.3/KCNA3 channel. This Euscorpiops validus (Scorpion) protein is Scorpine-like peptide Ev37.